The primary structure comprises 429 residues: Glutamate-1-semialdehyde 2,1-aminomutase (429 aa).

At lysine 267 the chain carries N6-(pyridoxal phosphate)lysine.

The protein belongs to the class-III pyridoxal-phosphate-dependent aminotransferase family. HemL subfamily. As to quaternary structure, homodimer. Pyridoxal 5'-phosphate is required as a cofactor.

Its subcellular location is the cytoplasm. The enzyme catalyses (S)-4-amino-5-oxopentanoate = 5-aminolevulinate. The protein operates within porphyrin-containing compound metabolism; protoporphyrin-IX biosynthesis; 5-aminolevulinate from L-glutamyl-tRNA(Glu): step 2/2. In Xanthomonas oryzae pv. oryzae (strain MAFF 311018), this protein is Glutamate-1-semialdehyde 2,1-aminomutase.